Consider the following 411-residue polypeptide: Phospholipase ABHD3 (411 aa).

Residues 25–45 (VGFFGSGVGFSLILGFSVAYA) traverse the membrane as a helical; Signal-anchor for type II membrane protein segment. One can recognise an AB hydrolase-1 domain in the interval 140-247 (PTVLLLPGLT…PLKAAATFSV (108 aa)). Active-site charge relay system residues include Ser-220, Asp-346, and His-375.

It belongs to the AB hydrolase superfamily. AB hydrolase 4 family.

The protein resides in the membrane. It carries out the reaction a 1,2-diacyl-sn-glycero-3-phosphocholine + H2O = a 1-acyl-sn-glycero-3-phosphocholine + a fatty acid + H(+). The catalysed reaction is a 1,2-diacyl-sn-glycero-3-phosphocholine + H2O = a 2-acyl-sn-glycero-3-phosphocholine + a fatty acid + H(+). It catalyses the reaction 1-tetradecanoyl-2-(9Z,12Z-octadecadienoyl)-sn-glycero-3-phosphocholine + H2O = 2-(9Z,12Z-octadecadienoyl)-sn-glycero-3-phosphocholine + tetradecanoate + H(+). The enzyme catalyses 1-tetradecanoyl-2-(9Z,12Z-octadecadienoyl)-sn-glycero-3-phosphocholine + H2O = 1-tetradecanoyl-sn-glycero-3-phosphocholine + (9Z,12Z)-octadecadienoate + H(+). It carries out the reaction 1-tetradecanoyl-2-(5Z,8Z,11Z,14Z-eicosatetraenoyl)-sn-glycero-3-phosphocholine + H2O = 2-(5Z,8Z,11Z,14Z)-eicosatetraenoyl-sn-glycero-3-phosphocholine + tetradecanoate + H(+). The catalysed reaction is 1-tetradecanoyl-2-(4Z,7Z,10Z,13Z,16Z,19Z-docosahexaenoyl)-sn-glycero-3-phosphocholine + H2O = 2-(4Z,7Z,10Z,13Z,16Z,19Z-docosahexaenoyl)-sn-glycero-3-phosphocholine + tetradecanoate + H(+). It catalyses the reaction 1,2-ditetradecanoyl-sn-glycero-3-phosphocholine + H2O = 2-tetradecanoyl-sn-glycero-3-phosphocholine + tetradecanoate + H(+). The enzyme catalyses 1-octadecanoyl-2-acetyl-sn-glycero-3-phosphocholine + H2O = 1-octadecanoyl-sn-glycero-3-phosphocholine + acetate + H(+). It carries out the reaction 1,2-ditetradecanoyl-sn-glycero-3-phosphocholine + H2O = 1-tetradecanoyl-sn-glycero-3-phosphocholine + tetradecanoate + H(+). The catalysed reaction is 1-octadecanoyl-2-pentanoyl-sn-glycero-3-phosphocholine + H2O = pentanoate + 1-octadecanoyl-sn-glycero-3-phosphocholine + H(+). It catalyses the reaction 1-octadecanoyl-2-hexanoyl-sn-glycero-3-phosphocholine + H2O = hexanoate + 1-octadecanoyl-sn-glycero-3-phosphocholine + H(+). The enzyme catalyses 1-octadecanoyl-2-octanoyl-sn-glycero-3-phosphocholine + H2O = 1-octadecanoyl-sn-glycero-3-phosphocholine + octanoate + H(+). It carries out the reaction 1-octadecanoyl-2-nonanoyl-sn-glycero-3-phosphocholine + H2O = nonanoate + 1-octadecanoyl-sn-glycero-3-phosphocholine + H(+). The catalysed reaction is 1-O-hexadecyl-2-nonadioyl-sn-glycero-3-phosphocholine + H2O = nonanedioate + 1-O-hexadecyl-sn-glycero-3-phosphocholine + H(+). It catalyses the reaction 1-hexadecanoyl-2-nonadioyl-sn-glycero-3-phosphocholine + H2O = nonanedioate + 1-hexadecanoyl-sn-glycero-3-phosphocholine + H(+). The enzyme catalyses 1-hexadecanoyl-2-(9-oxononanoyl)-sn-glycero-3-phosphocholine + H2O = 9-oxononanoate + 1-hexadecanoyl-sn-glycero-3-phosphocholine + H(+). It carries out the reaction 1-hexadecanoyl-2-(5-oxopentanoyl)-sn-glycero-3-phosphocholine + H2O = 5-oxopentanoate + 1-hexadecanoyl-sn-glycero-3-phosphocholine + H(+). The catalysed reaction is 1-hexadecanoyl-2-glutaroyl-sn-glycero-3-phosphocholine + H2O = glutarate + 1-hexadecanoyl-sn-glycero-3-phosphocholine + H(+). It catalyses the reaction 1-O-hexadecyl-2-acetyl-sn-glycero-3-phosphocholine + H2O = 1-O-hexadecyl-sn-glycero-3-phosphocholine + acetate + H(+). Its function is as follows. Phospholipase that may play a role in phospholipids remodeling. May selectively cleave myristate (C14)-containing phosphatidylcholines through its predominant phospholipase 1 activity, cleaving preferentially acyl groups in sn1 position. In parallel, may have a minor phospholipase 2 activity acting on acyl groups in position sn2. In addition to (C14)-containing phosphatidylcholines, may also act on other medium-chain-containing and oxidatively truncated phospholipids. This is Phospholipase ABHD3 from Bos taurus (Bovine).